A 70-amino-acid chain; its full sequence is Movement protein TGBp3 (70 aa).

The Lumenal segment spans residues 1-4 (MEVN). A helical transmembrane segment spans residues 5–27 (TYLNAIILVLVVTIIAVISTSLV). At 28–70 (RTEPCVIKITGESITVLACKLDAETIKAIADLKPLSVERLSFH) the chain is on the cytoplasmic side.

This sequence belongs to the Tymovirales TGBp3 protein family.

It is found in the host endoplasmic reticulum membrane. In terms of biological role, plays a role in viral cell-to-cell propagation, by facilitating genome transport to neighboring plant cells through plasmosdesmata. May induce the formation of granular vesicles derived from the endoplasmic reticulum, which align on actin filaments. The polypeptide is Movement protein TGBp3 (Brassica campestris (Field mustard)).